A 393-amino-acid chain; its full sequence is CCA-adding enzyme (393 aa).

ATP-binding residues include glycine 27 and arginine 30. CTP-binding residues include glycine 27 and arginine 30. Positions 40 and 42 each coordinate Mg(2+). The ATP site is built by arginine 111, aspartate 154, arginine 157, arginine 160, and arginine 163. CTP contacts are provided by arginine 111, aspartate 154, arginine 157, arginine 160, and arginine 163.

Belongs to the tRNA nucleotidyltransferase/poly(A) polymerase family. Bacterial CCA-adding enzyme type 3 subfamily. As to quaternary structure, homodimer. It depends on Mg(2+) as a cofactor.

The enzyme catalyses a tRNA precursor + 2 CTP + ATP = a tRNA with a 3' CCA end + 3 diphosphate. The catalysed reaction is a tRNA with a 3' CCA end + 2 CTP + ATP = a tRNA with a 3' CCACCA end + 3 diphosphate. Functionally, catalyzes the addition and repair of the essential 3'-terminal CCA sequence in tRNAs without using a nucleic acid template. Adds these three nucleotides in the order of C, C, and A to the tRNA nucleotide-73, using CTP and ATP as substrates and producing inorganic pyrophosphate. tRNA 3'-terminal CCA addition is required both for tRNA processing and repair. Also involved in tRNA surveillance by mediating tandem CCA addition to generate a CCACCA at the 3' terminus of unstable tRNAs. While stable tRNAs receive only 3'-terminal CCA, unstable tRNAs are marked with CCACCA and rapidly degraded. This chain is CCA-adding enzyme, found in Listeria monocytogenes serotype 4b (strain CLIP80459).